A 504-amino-acid chain; its full sequence is Chorion-specific transcription factor GCMb (504 aa).

The segment at residues 19–174 (LTWDINDPQM…KSETEGRRSA (156 aa)) is a DNA-binding region (GCM). 8 residues coordinate Zn(2+): cysteine 81, cysteine 87, cysteine 91, cysteine 118, cysteine 121, cysteine 130, histidine 157, and histidine 159. 2 stretches are compositionally biased toward basic and acidic residues: residues 155-172 (GVHDHPRPESKSETEGRR) and 188-203 (RRSEEPEARSTQDIRG). The disordered stretch occupies residues 155-203 (GVHDHPRPESKSETEGRRSALKRQMASFYQPQKRRSEEPEARSTQDIRG). The C-terminal conserved inhibitory domain (CCID) stretch occupies residues 379–393 (LQTVITTTVAYQAYQ). A disordered region spans residues 438-472 (ASPSGRAPLKVPGDCQAPRPTLDFPQEADPSGTDG).

The protein localises to the nucleus. In terms of biological role, transcription factor that binds specific sequences on gene promoters and activate their transcription. Through the regulation of gene transcription, may play a role in parathyroid gland development. The chain is Chorion-specific transcription factor GCMb from Mus musculus (Mouse).